We begin with the raw amino-acid sequence, 159 residues long: Large ribosomal subunit protein uL22 (159 aa).

The protein belongs to the universal ribosomal protein uL22 family. Part of the 50S ribosomal subunit.

In terms of biological role, this protein binds specifically to 23S rRNA. It makes multiple contacts with different domains of the 23S rRNA in the assembled 50S subunit and ribosome. Functionally, the globular domain of the protein is located near the polypeptide exit tunnel on the outside of the subunit, while an extended beta-hairpin is found that lines the wall of the exit tunnel in the center of the 70S ribosome. This is Large ribosomal subunit protein uL22 from Methanopyrus kandleri (strain AV19 / DSM 6324 / JCM 9639 / NBRC 100938).